Reading from the N-terminus, the 395-residue chain is Cation channel sperm-associated protein 3 (395 aa).

The Cytoplasmic segment spans residues 1–48 (MSQHFHHNPVRVKSGSLFATASEALQARLSKIKRKDKECQAYFRKVIK). The chain crosses the membrane as a helical span at residues 49-71 (STFFQIVMITTVTTNSFLLVLGT). Residues 72 to 80 (NYDIQFEFF) lie on the Extracellular side of the membrane. Residues 81–107 (RTFEVSELFFVSVYVCEFLMKVYVDPI) traverse the membrane as a helical segment. A topological domain (cytoplasmic) is located at residue Thr108. The helical transmembrane segment at 109–131 (YWKDGYNILDVIILIILTIPYLL) threads the bilayer. At 132 to 143 (RKIKGNHSAYLH) the chain is on the extracellular side. Residues 144–160 (FADGIQSLRILKLISYS) form a helical membrane-spanning segment. Topologically, residues 161–168 (RGIRTLII) are cytoplasmic. Residues 169-195 (AVGETVYTVASVLTLLFLLMFVFAILG) traverse the membrane as a helical segment. At 196–216 (FCLFGVTDRGDLENWGNLASA) the chain is on the extracellular side. An intramembrane region (helical; Pore-forming) is located at residues 217–236 (FFTLFSLATVDGWTDLQEEL). Topologically, residues 237-242 (DKRKFT) are extracellular. The chain crosses the membrane as a helical span at residues 243–268 (VSRAFTILFILLASFIFLNMFVGVMI). Residues 269-395 (MHTEDSMKKF…ESSSSLSGLS (127 aa)) are Cytoplasmic-facing.

Belongs to the cation channel sperm-associated (TC 1.A.1.19) family. Component of the CatSper complex or CatSpermasome composed of the core pore-forming members CATSPER1, CATSPER2, CATSPER3 and CATSPER4 as well as auxiliary members CATSPERB, CATSPERG2, CATSPERD, CATSPERE, CATSPERZ, C2CD6/CATSPERT, SLCO6C1, TMEM249, TMEM262 and EFCAB9. HSPA1 may be an additional auxiliary complex member. The core complex members CATSPER1, CATSPER2, CATSPER3 and CATSPER4 form a heterotetrameric channel. The auxiliary CATSPERB, CATSPERG2, CATSPERD and CATSPERE subunits form a pavilion-like structure over the pore which stabilizes the complex through interactions with CATSPER4, CATSPER3, CATSPER1 and CATSPER2 respectively. SLCO6C1 interacts with CATSPERE and TMEM262/CATSPERH interacts with CATSPERB, further stabilizing the complex. C2CD6/CATSPERT interacts at least with CATSPERD and is required for targeting the CatSper complex in the flagellar membrane. In terms of tissue distribution, testis-specific.

It is found in the cell projection. Its subcellular location is the cilium. The protein localises to the flagellum membrane. The enzyme catalyses Ca(2+)(in) = Ca(2+)(out). Its activity is regulated as follows. In contrast to the human ortholog, not activated by progesterone. Activated by intracellular alkalinization. Functionally, pore-forming subunit of the CatSper complex, a sperm-specific voltage-gated calcium channel that plays a central role in sperm cell hyperactivation. Controls calcium entry to mediate the hyperactivated motility, a step needed for sperm motility which is essential late in the preparation of sperm for fertilization. This chain is Cation channel sperm-associated protein 3 (Catsper3), found in Mus musculus (Mouse).